We begin with the raw amino-acid sequence, 197 residues long: Peptidyl-tRNA hydrolase (197 aa).

Y23 serves as a coordination point for tRNA. H28 functions as the Proton acceptor in the catalytic mechanism. TRNA is bound by residues F73, N75, and N121.

Belongs to the PTH family. In terms of assembly, monomer.

The protein resides in the cytoplasm. It carries out the reaction an N-acyl-L-alpha-aminoacyl-tRNA + H2O = an N-acyl-L-amino acid + a tRNA + H(+). Hydrolyzes ribosome-free peptidyl-tRNAs (with 1 or more amino acids incorporated), which drop off the ribosome during protein synthesis, or as a result of ribosome stalling. Its function is as follows. Catalyzes the release of premature peptidyl moieties from peptidyl-tRNA molecules trapped in stalled 50S ribosomal subunits, and thus maintains levels of free tRNAs and 50S ribosomes. This is Peptidyl-tRNA hydrolase from Frankia alni (strain DSM 45986 / CECT 9034 / ACN14a).